The primary structure comprises 170 residues: NADH-quinone oxidoreductase subunit B (170 aa).

4 residues coordinate [4Fe-4S] cluster: Cys-37, Cys-38, Cys-102, and Cys-131.

The protein belongs to the complex I 20 kDa subunit family. In terms of assembly, NDH-1 is composed of 14 different subunits. Subunits NuoB, C, D, E, F, and G constitute the peripheral sector of the complex. The cofactor is [4Fe-4S] cluster.

The protein localises to the cell inner membrane. It carries out the reaction a quinone + NADH + 5 H(+)(in) = a quinol + NAD(+) + 4 H(+)(out). NDH-1 shuttles electrons from NADH, via FMN and iron-sulfur (Fe-S) centers, to quinones in the respiratory chain. The immediate electron acceptor for the enzyme in this species is believed to be ubiquinone. Couples the redox reaction to proton translocation (for every two electrons transferred, four hydrogen ions are translocated across the cytoplasmic membrane), and thus conserves the redox energy in a proton gradient. This Geobacter sulfurreducens (strain ATCC 51573 / DSM 12127 / PCA) protein is NADH-quinone oxidoreductase subunit B.